A 169-amino-acid chain; its full sequence is E1B protein, small T-antigen (169 aa).

Belongs to the adenoviridae E1B 19 kDa protein family.

The chain is E1B protein, small T-antigen from Canis lupus familiaris (Dog).